The primary structure comprises 211 residues: Late expression factor 7 (211 aa).

In terms of biological role, involved in late/very late gene activation. This chain is Late expression factor 7 (LEF-7), found in Orgyia pseudotsugata multicapsid polyhedrosis virus (OpMNPV).